We begin with the raw amino-acid sequence, 346 residues long: MDPIALDERIGTLDYLRGFALLGIILVNILGLLTVKTPALHSVDAVYQRFLYFFVEARFYPIFSFLFGVGFYLFIARANTRGENGAILFLRRILVLFIFGFIHFLFQPGEALTVYASCGLLMLPFYKIKKEVNLFTGCILLLFVSIFAAKIFMPLPLILLGLSAGQYRIFEKLARYKTETAIFTFFMFILSVGGLLLQYCYVPEQPFNNLNGLEKNYQNMDQLKWFLHLGVATGPILSAFYAGFLLLLLQAPIARRLLSPLKSYGRMALTNYISQTALILLAGKLFHLFNRITYLQSLWLCLAIYVIQLIFSAMWLKYCKFGPLEWVWRMMTYNRKFPILLKKEAD.

A run of 8 helical transmembrane segments spans residues 15–35 (YLRG…LLTV), 55–75 (VEAR…YLFI), 93–113 (ILVL…EALT), 139–159 (ILLL…PLIL), 182–202 (IFTF…YCYV), 229–249 (LGVA…LLLL), 269–289 (LTNY…FHLF), and 295–315 (LQSL…SAMW).

The protein to E.coli YeiB, B.subtilis YxaH and B.subtilis YrkO.

It is found in the cell membrane. Its function is as follows. Involved in transport. This is an uncharacterized protein from Bacillus acidopullulyticus.